The chain runs to 600 residues: DNA ligase (600 aa).

D258 contacts ATP. Residue K260 is the N6-AMP-lysine intermediate of the active site. ATP-binding residues include R265, R280, E310, F350, R427, and K433.

It belongs to the ATP-dependent DNA ligase family. The cofactor is Mg(2+).

It catalyses the reaction ATP + (deoxyribonucleotide)n-3'-hydroxyl + 5'-phospho-(deoxyribonucleotide)m = (deoxyribonucleotide)n+m + AMP + diphosphate.. Its activity is regulated as follows. Inhibited by PCNA123 and PCNA323. DNA ligase that seals nicks in double-stranded DNA during DNA replication, DNA recombination and DNA repair. The protein is DNA ligase of Sulfurisphaera tokodaii (strain DSM 16993 / JCM 10545 / NBRC 100140 / 7) (Sulfolobus tokodaii).